The chain runs to 125 residues: Acidic phospholipase A2 5 (125 aa).

Residue Ser1 is a signal peptide. Residues 2–7 (NRPMPL) constitute a propeptide that is removed on maturation. 8 disulfide bridges follow: Cys18-Cys77, Cys33-Cys124, Cys35-Cys50, Cys37-Cys54, Cys49-Cys105, Cys56-Cys98, Cys66-Cys91, and Cys84-Cys96. Phe28 lines the N-acetyl-beta-D-glucosamine pocket. Asp30 contacts Zn(2+). Residues Tyr34 and Gly36 each contribute to the Ca(2+) site. N-acetyl-beta-D-glucosamine is bound by residues His53 and Lys69. The active site involves His53. Residue Glu76 participates in Zn(2+) binding. Asp99 is a catalytic residue. Asn117 provides a ligand contact to Zn(2+).

Heterodimer formed between isoform 5 and isoform 6 in presence of zinc ion and monomer in absence of zinc ion. Ca(2+) serves as cofactor. Expressed by the venom gland.

The protein resides in the secreted. It carries out the reaction a 1,2-diacyl-sn-glycero-3-phosphocholine + H2O = a 1-acyl-sn-glycero-3-phosphocholine + a fatty acid + H(+). PLA2 catalyzes the calcium-dependent hydrolysis of the 2-acyl groups in 3-sn-phosphoglycerides. The sequence is that of Acidic phospholipase A2 5 from Naja sagittifera (Andaman cobra).